The chain runs to 351 residues: 3-ketosteroid-9-alpha-monooxygenase, ferredoxin reductase component (351 aa).

The FAD-binding FR-type domain maps to 10 to 116 (SRSVILTVSA…LPPAGVFTPK (107 aa)). The 2Fe-2S ferredoxin-type domain occupies 264-351 (ATVEVELDGE…PVTDHLKIEF (88 aa)). Cys300, Cys305, Cys308, and Cys338 together coordinate [2Fe-2S] cluster.

The two-component system 3-ketosteroid-9-alpha-monooxygenase is composed of an oxygenase component KshA and a reductase component KshB. FAD is required as a cofactor. [2Fe-2S] cluster serves as cofactor.

The enzyme catalyses androsta-1,4-diene-3,17-dione + 2 reduced [2Fe-2S]-[ferredoxin] + O2 + 2 H(+) = 9alpha-hydroxyandrosta-1,4-diene-3,17-dione + 2 oxidized [2Fe-2S]-[ferredoxin] + H2O. It participates in steroid metabolism; cholesterol degradation. With respect to regulation, KSH activity is completely inhibited by zinc ions. KshB is specifically inhibited by Cu(2+) ions. Functionally, probably involved in the degradation of cholesterol. In vitro, catalyzes the introduction of a 9alpha-hydroxyl moiety into the ring B of 3-ketosteroid substrates such as 1,4-androstadiene-3,17-dione (ADD), 4-androstene-3,17-dione (AD), 4-androstene-17beta-ol-3-one (testosterone), 4-pregnene-3,20-dione (progesterone), 19-nor-4-androstene-3,17-dione (nordion), 1-(5alpha)-androstene-3,17-dione, 5alpha-androstane-3,17-dione and 5beta-androstane-3,17-dione. KSH has the highest activity with 3-keto-Delta4 steroid substrates. The polypeptide is 3-ketosteroid-9-alpha-monooxygenase, ferredoxin reductase component (Rhodococcus rhodochrous).